Consider the following 51-residue polypeptide: Ribosome biogenesis protein Nop10 (51 aa).

Belongs to the NOP10 family.

Involved in ribosome biogenesis; more specifically in 18S rRNA pseudouridylation and in cleavage of pre-rRNA. This Methanococcus aeolicus (strain ATCC BAA-1280 / DSM 17508 / OCM 812 / Nankai-3) protein is Ribosome biogenesis protein Nop10.